Consider the following 167-residue polypeptide: MDLKTTVLHITDSFTDEEMYCLLFLINGCIPRSCNAVNISDLIIETLSKSTQWDICLMQCLYVLRKIGLLLNLFQVTKEAVKQSFFTQPQLETHVLTLVNVNNNLTAKDEKRLCFILDQFFPRNVAAPSVILCVFSNMLCEMHVLECLCQLKKCLKQIGRSDLAKTV.

DED domains follow at residues 2 to 75 (DLKT…NLFQ) and 93 to 167 (THVL…AKTV).

This is an uncharacterized protein from Saimiriine herpesvirus 2 (strain 11) (SaHV-2).